Consider the following 1612-residue polypeptide: Mediator of RNA polymerase II transcription subunit 12 (1612 aa).

Disordered regions lie at residues 18 to 114 (AVYS…PSLS) and 1514 to 1547 (PVSI…QPAF). The segment covering 66–80 (VLEREPPAKRLKIDV) has biased composition (basic and acidic residues). Composition is skewed to low complexity over residues 99–114 (SKST…PSLS) and 1518–1538 (PSPA…PTGG).

Belongs to the Mediator complex subunit 12 family. In terms of assembly, component of the srb8-11 complex, which itself associates with the Mediator complex.

Its subcellular location is the nucleus. Component of the srb8-11 complex. The srb8-11 complex is a regulatory module of the Mediator complex which is itself involved in regulation of basal and activated RNA polymerase II-dependent transcription. The srb8-11 complex may be involved in the transcriptional repression of a subset of genes regulated by Mediator. It may inhibit the association of the Mediator complex with RNA polymerase II to form the holoenzyme complex. The sequence is that of Mediator of RNA polymerase II transcription subunit 12 (srb8) from Neosartorya fischeri (strain ATCC 1020 / DSM 3700 / CBS 544.65 / FGSC A1164 / JCM 1740 / NRRL 181 / WB 181) (Aspergillus fischerianus).